The chain runs to 370 residues: Cobalt-precorrin-5B C(1)-methyltransferase (370 aa).

It belongs to the CbiD family.

It catalyses the reaction Co-precorrin-5B + S-adenosyl-L-methionine = Co-precorrin-6A + S-adenosyl-L-homocysteine. It functions in the pathway cofactor biosynthesis; adenosylcobalamin biosynthesis; cob(II)yrinate a,c-diamide from sirohydrochlorin (anaerobic route): step 6/10. In terms of biological role, catalyzes the methylation of C-1 in cobalt-precorrin-5B to form cobalt-precorrin-6A. The chain is Cobalt-precorrin-5B C(1)-methyltransferase from Nostoc sp. (strain PCC 7120 / SAG 25.82 / UTEX 2576).